The chain runs to 439 residues: Exosome complex component RRP45 (439 aa).

An ARE binding region spans residues 1 to 268 (MKETPLSNCE…AEITELILKA (268 aa)). Phosphoserine is present on Ser65. N6-acetyllysine; alternate is present on Lys297. Lys297 participates in a covalent cross-link: Glycyl lysine isopeptide (Lys-Gly) (interchain with G-Cter in SUMO1); alternate. A Glycyl lysine isopeptide (Lys-Gly) (interchain with G-Cter in SUMO2); alternate cross-link involves residue Lys297. A phosphoserine mark is found at Ser306, Val325, Ser327, and Ser346. Disordered stretches follow at residues 335–363 (GTAQ…GGGD) and 391–439 (LSDS…RAAN). A compositionally biased stretch (acidic residues) spans 349–361 (DLEDSEKEDDEGG). A phosphoserine mark is found at Ser392, Ser394, Lys409, and Ile411. Lys419 participates in a covalent cross-link: Glycyl lysine isopeptide (Lys-Gly) (interchain with G-Cter in SUMO2). Over residues 425–439 (SKKPVKRRKKKRAAN) the composition is skewed to basic residues.

It belongs to the RNase PH family. Component of the RNA exosome core complex (Exo-9), composed of EXOSC1, EXOSC2, EXOSC3, EXOSC4, EXOSC5, EXOSC6, EXOSC7, EXOSC8 and EXOSC9; within the complex interacts with EXOSC3, EXOSC4, EXOSC5 and DIS3. The catalytically inactive RNA exosome core complex (Exo-9) associates with the catalytic subunit EXOSC10/RRP6. Exo-9 may associate with DIS3 to form the nucleolar exosome complex, or DIS3L to form the cytoplasmic exosome complex. Exo-9 is formed by a hexameric base ring consisting of the heterodimers EXOSC4-EXOSC9, EXOSC5-EXOSC8 and EXOSC6-EXOSC7, and a cap ring consisting of EXOSC1, EXOSC2 and EXOSC3. The RNA exosome complex associates with cofactors C1D/RRP47, MPHOSPH6/MPP6 and MTREX/MTR4. Interacts (via C-terminus region) with SETX (via N-terminus domain); the interaction enhances SETX sumoylation. Interacts with DIS3; the interaction is direct.

It is found in the cytoplasm. The protein resides in the nucleus. Its subcellular location is the nucleolus. It localises to the nucleoplasm. Functionally, non-catalytic component of the RNA exosome complex which has 3'-&gt;5' exoribonuclease activity and participates in a multitude of cellular RNA processing and degradation events. In the nucleus, the RNA exosome complex is involved in proper maturation of stable RNA species such as rRNA, snRNA and snoRNA, in the elimination of RNA processing by-products and non-coding 'pervasive' transcripts, such as antisense RNA species and promoter-upstream transcripts (PROMPTs), and of mRNAs with processing defects, thereby limiting or excluding their export to the cytoplasm. The RNA exosome may be involved in Ig class switch recombination (CSR) and/or Ig variable region somatic hypermutation (SHM) by targeting AICDA deamination activity to transcribed dsDNA substrates. In the cytoplasm, the RNA exosome complex is involved in general mRNA turnover and specifically degrades inherently unstable mRNAs containing AU-rich elements (AREs) within their 3' untranslated regions, and in RNA surveillance pathways, preventing translation of aberrant mRNAs. It seems to be involved in degradation of histone mRNA. The catalytic inactive RNA exosome core complex of 9 subunits (Exo-9) is proposed to play a pivotal role in the binding and presentation of RNA for ribonucleolysis, and to serve as a scaffold for the association with catalytic subunits and accessory proteins or complexes. EXOSC9 binds to ARE-containing RNAs. This Homo sapiens (Human) protein is Exosome complex component RRP45 (EXOSC9).